The following is a 200-amino-acid chain: Adenylate kinase (200 aa).

10–15 (GAGKGT) is an ATP binding site. The NMP stretch occupies residues 30 to 59 (STGDMLRAAVAAETPVGLEAKAIMESGGLV). AMP-binding positions include threonine 31, arginine 36, 57–59 (GLV), 85–88 (GFPR), and glutamine 92. An LID region spans residues 126-142 (KRAEETAARGQPVRKDD). Position 127 (arginine 127) interacts with ATP. Residues arginine 139 and arginine 150 each contribute to the AMP site. An ATP-binding site is contributed by lysine 178.

It belongs to the adenylate kinase family. Monomer.

Its subcellular location is the cytoplasm. It catalyses the reaction AMP + ATP = 2 ADP. It functions in the pathway purine metabolism; AMP biosynthesis via salvage pathway; AMP from ADP: step 1/1. Its function is as follows. Catalyzes the reversible transfer of the terminal phosphate group between ATP and AMP. Plays an important role in cellular energy homeostasis and in adenine nucleotide metabolism. The chain is Adenylate kinase from Methylorubrum extorquens (strain PA1) (Methylobacterium extorquens).